The chain runs to 257 residues: Type III pantothenate kinase (257 aa).

6-13 (DVGNTNTV) contacts ATP. Residues Y102 and 109 to 112 (GADR) contribute to the substrate site. D111 (proton acceptor) is an active-site residue. Position 131 (D131) interacts with K(+). Residue T134 participates in ATP binding. T186 provides a ligand contact to substrate.

It belongs to the type III pantothenate kinase family. In terms of assembly, homodimer. NH4(+) serves as cofactor. It depends on K(+) as a cofactor.

It localises to the cytoplasm. It catalyses the reaction (R)-pantothenate + ATP = (R)-4'-phosphopantothenate + ADP + H(+). Its pathway is cofactor biosynthesis; coenzyme A biosynthesis; CoA from (R)-pantothenate: step 1/5. Functionally, catalyzes the phosphorylation of pantothenate (Pan), the first step in CoA biosynthesis. The protein is Type III pantothenate kinase of Leptospira interrogans serogroup Icterohaemorrhagiae serovar copenhageni (strain Fiocruz L1-130).